The following is a 522-amino-acid chain: Berberine bridge enzyme-like Cyn d 4 (522 aa).

Positions 1 to 25 are cleaved as a signal peptide; the sequence is MARSRAFAFALLICAVAASCHVALS. Residues Cys-41 and Cys-98 are joined by a disulfide bond. In terms of domain architecture, FAD-binding PCMH-type spans 76–252; sequence KTVKPLYIIT…ASWQVKLLPV (177 aa). N-linked (GlcNAc...) asparagine glycosylation is present at Asn-88. FAD contacts are provided by residues 108 to 114, Ser-119, Ser-152, 176 to 177, 181 to 185, Phe-191, Glu-237, and Val-242; these read VRSGGHD, VC, and GVGGH. The segment at residues 113–177 is a cross-link (6-(S-cysteinyl)-8alpha-(pros-histidyl)-FAD (His-Cys)); sequence HDYEGLSYRS…PKLGFPAGVC (65 aa). An intrachain disulfide couples Cys-308 to Cys-329. Asn-325 and Asn-354 each carry an N-linked (GlcNAc...) asparagine glycan. 461-465 serves as a coordination point for FAD; that stretch reads YVNYR. Asn-477 carries N-linked (GlcNAc...) asparagine glycosylation.

Belongs to the oxygen-dependent FAD-linked oxidoreductase family. Monomer. It depends on FAD as a cofactor. Post-translationally, the FAD cofactor is bound via a bicovalent 6-S-cysteinyl, 8alpha-N1-histidyl FAD linkage. In terms of processing, the N-terminus is blocked. Glycosylated. N-glycosylated. Contains fucose, N-acetylglucosamine, and mannose as main carbohydrates (in a ratio of approximately 3:2:1), and a minute amount of xylose. The two most abundant oligosaccharides are Fuc(1)GlcNAc(2)Man(3) and Fuc(1)GlcNAc(2)Man(2), together comprising about 80% of the total carbohydrate content. They are structurally unusual in having a L-Fuc alpha-(1,3)-linked to Asn-linked GlcNAc without a Xyl beta-(1,2)-linked to the branching Man. The other oligosaccharides make up only 9% of the total carbohydrate content and are characterized by the presence of Xyl beta-(1,2)-linked to the branching Man. Expressed in pollen (at protein level).

The chain is Berberine bridge enzyme-like Cyn d 4 from Cynodon dactylon (Bermuda grass).